Reading from the N-terminus, the 510-residue chain is MIWHVQNENFILDSTRIFMKAFHLLLFNGSFIFPECILIFGLILLLMIDSTSDQKDRPWFYFISSTSLVISITALLFRWREEPIISFSGNFQTNNFNEIFQFLILLCSTLCIPLSVEYIECTEMAITEFLLFILTATLGGMFLCGANDLITIFVAPECFSLCSYLLSGYTKRDLRSNEATMKYLLMGGASSSILVHGFSWLYGSSGGEIELQEIVNGLINTQMYNSPGISIALISITVGLGFKLSPAPFHQWTPDVYEGSPTPVVAFLSVTSKVAASASATRILDIPFYFSSNEWHLLLEILAILSMILGNLLAITQTSMKRMLAYSSIGQIGYVIIGIIVGDSNDGYASMITYMLFYISMNLGTFACIVLFGLRTGTDNIRDYAGLYTKDPFLALSLALCLLSLGGLPPLAGFFGKLYLFWCGWQAGLYFLVSIGLLTSVLSIYYYLKIIKLLMTGRNQEITPYVRNYRRSPLRSNNSIELSMTVCVIASTLPGISMNPILAIAQDTLF.

The next 12 membrane-spanning stretches (helical) occupy residues 24 to 44, 59 to 79, 99 to 119, 124 to 144, 149 to 169, 183 to 203, 229 to 249, 295 to 315, 323 to 343, 354 to 374, 395 to 415, and 418 to 438; these read LLLF…GLIL, WFYF…LFRW, IFQF…VEYI, MAIT…MFLC, LITI…LSGY, YLLM…WLYG, ISIA…PAPF, WHLL…LLAI, MLAY…IVGD, YMLF…LFGL, ALSL…AGFF, and LYLF…IGLL.

This sequence belongs to the complex I subunit 2 family. NDH is composed of at least 16 different subunits, 5 of which are encoded in the nucleus.

The protein localises to the plastid. It localises to the chloroplast thylakoid membrane. The enzyme catalyses a plastoquinone + NADH + (n+1) H(+)(in) = a plastoquinol + NAD(+) + n H(+)(out). It carries out the reaction a plastoquinone + NADPH + (n+1) H(+)(in) = a plastoquinol + NADP(+) + n H(+)(out). Functionally, NDH shuttles electrons from NAD(P)H:plastoquinone, via FMN and iron-sulfur (Fe-S) centers, to quinones in the photosynthetic chain and possibly in a chloroplast respiratory chain. The immediate electron acceptor for the enzyme in this species is believed to be plastoquinone. Couples the redox reaction to proton translocation, and thus conserves the redox energy in a proton gradient. This chain is NAD(P)H-quinone oxidoreductase subunit 2 B, chloroplastic, found in Lolium perenne (Perennial ryegrass).